A 324-amino-acid chain; its full sequence is tRNA dimethylallyltransferase (324 aa).

Residue 17 to 24 (GPTASGKT) coordinates ATP. Substrate is bound at residue 19 to 24 (TASGKT). 4 interaction with substrate tRNA regions span residues 42 to 45 (DSAL), 166 to 170 (QRIQR), 251 to 256 (RCVGYR), and 284 to 291 (KRQITWLR).

It belongs to the IPP transferase family. As to quaternary structure, monomer. Mg(2+) is required as a cofactor.

It carries out the reaction adenosine(37) in tRNA + dimethylallyl diphosphate = N(6)-dimethylallyladenosine(37) in tRNA + diphosphate. Functionally, catalyzes the transfer of a dimethylallyl group onto the adenine at position 37 in tRNAs that read codons beginning with uridine, leading to the formation of N6-(dimethylallyl)adenosine (i(6)A). The chain is tRNA dimethylallyltransferase from Burkholderia ambifaria (strain MC40-6).